The chain runs to 105 residues: Large ribosomal subunit protein bL21 (105 aa).

The protein belongs to the bacterial ribosomal protein bL21 family. In terms of assembly, part of the 50S ribosomal subunit. Contacts protein L20.

In terms of biological role, this protein binds to 23S rRNA in the presence of protein L20. This Porphyromonas gingivalis (strain ATCC BAA-308 / W83) protein is Large ribosomal subunit protein bL21.